Consider the following 1429-residue polypeptide: Autophagy-related protein 11 (1429 aa).

Coiled-coil stretches lie at residues 540-579 (GDDDLLQSLQEDKGKLENKLKTAESRVRRLEDLLHRQSQA), 616-808 (EGID…LDDH), 842-985 (TLVE…HMNS), and 1106-1135 (RRIKEVEHMARKWQKEARSYRERAHILQKD). The tract at residues 574–622 (HRQSQASRPGNLFQPQGSQQRERVNSASSVRSSRFDDRRRSSEGIDPLM) is disordered. Over residues 575–592 (RQSQASRPGNLFQPQGSQ) the composition is skewed to polar residues. Residues 606–616 (SRFDDRRRSSE) show a composition bias toward basic and acidic residues. Disordered regions lie at residues 1205-1224 (SKSLQPSSETESINDEENDN) and 1333-1405 (RAHN…PTRR). Composition is skewed to polar residues over residues 1206-1215 (KSLQPSSETE) and 1333-1362 (RAHNADTPSGTSPTQGGHLTSTNASLGQKN). The segment covering 1384 to 1398 (KADEQPRSVVQREDS) has biased composition (basic and acidic residues).

This sequence belongs to the ATG11 family. In terms of assembly, homodimer and potential homooligomers. Interacts with ATG1 kinase and the ATG19 and ATG34 cargo protein transporters. Interacts with ATG9, ATG17 and ATG20.

The protein localises to the preautophagosomal structure membrane. Its subcellular location is the vacuole membrane. Involved in cytoplasm to vacuole transport (Cvt), pexophagy, mitophagy and nucleophagy. Recruits mitochondria for their selective degradation via autophagy (mitophagy) during starvation, through its interaction with ATG32. Works as scaffold proteins that recruit ATG proteins to the pre-autophagosome (PAS), the site of vesicle/autophagosome formation. Required for ATG9 anterograde transport from the mitochondria to the PAS. Also recruits the ATG19-prAPE1 complex to the PAS. Required for the Cvt vesicles completion. Autophagy is required for proper vegetative growth, asexual/sexual reproduction, and full virulence. Autophagy is particularly involved in the biosynthesis of deoxynivalenol (DON), an important virulence determinant. This Gibberella zeae (strain ATCC MYA-4620 / CBS 123657 / FGSC 9075 / NRRL 31084 / PH-1) (Wheat head blight fungus) protein is Autophagy-related protein 11.